The sequence spans 258 residues: Exosome complex component Rrp41 (258 aa).

Belongs to the RNase PH family. Rrp41 subfamily. Component of the archaeal exosome complex. Forms a hexameric ring-like arrangement composed of 3 Rrp41-Rrp42 heterodimers. The hexameric ring associates with a trimer of Rrp4 and/or Csl4 subunits.

The protein localises to the cytoplasm. Its function is as follows. Catalytic component of the exosome, which is a complex involved in RNA degradation. Has 3'-&gt;5' exoribonuclease activity. Can also synthesize heteromeric RNA-tails. In Archaeoglobus fulgidus (strain ATCC 49558 / DSM 4304 / JCM 9628 / NBRC 100126 / VC-16), this protein is Exosome complex component Rrp41.